A 338-amino-acid polypeptide reads, in one-letter code: DNA-directed RNA polymerase subunit alpha (338 aa).

The segment at 1 to 234 (MIHKNWAELI…DQLSIFVNFE (234 aa)) is alpha N-terminal domain (alpha-NTD). The interval 250–338 (FNPLLLKKVD…DLAKRFEDQF (89 aa)) is alpha C-terminal domain (alpha-CTD).

It belongs to the RNA polymerase alpha chain family. As to quaternary structure, homodimer. The RNAP catalytic core consists of 2 alpha, 1 beta, 1 beta' and 1 omega subunit. When a sigma factor is associated with the core the holoenzyme is formed, which can initiate transcription.

The enzyme catalyses RNA(n) + a ribonucleoside 5'-triphosphate = RNA(n+1) + diphosphate. In terms of biological role, DNA-dependent RNA polymerase catalyzes the transcription of DNA into RNA using the four ribonucleoside triphosphates as substrates. This chain is DNA-directed RNA polymerase subunit alpha, found in Cereibacter sphaeroides (strain ATCC 17025 / ATH 2.4.3) (Rhodobacter sphaeroides).